The sequence spans 752 residues: Polyribonucleotide nucleotidyltransferase (752 aa).

D519 and D525 together coordinate Mg(2+). Residues 585–644 (PRVIAVKIPVDKIGEVIGPKGKMINQIQEDTGADISIEDDGTVYIGATNGPSADAARSAI) form the KH domain. Positions 656-728 (GERYLGTVVK…DRGKLSLSPV (73 aa)) constitute an S1 motif domain. A disordered region spans residues 727 to 752 (PVVAEEEGAEGAERAHATEPAEGAEI).

It belongs to the polyribonucleotide nucleotidyltransferase family. Mg(2+) serves as cofactor.

Its subcellular location is the cytoplasm. The catalysed reaction is RNA(n+1) + phosphate = RNA(n) + a ribonucleoside 5'-diphosphate. Involved in mRNA degradation. Catalyzes the phosphorolysis of single-stranded polyribonucleotides processively in the 3'- to 5'-direction. In Pseudarthrobacter chlorophenolicus (strain ATCC 700700 / DSM 12829 / CIP 107037 / JCM 12360 / KCTC 9906 / NCIMB 13794 / A6) (Arthrobacter chlorophenolicus), this protein is Polyribonucleotide nucleotidyltransferase.